Consider the following 465-residue polypeptide: GTPase Der (465 aa).

2 consecutive EngA-type G domains span residues 3–167 (PLVA…PEEG) and 179–352 (VRIA…ASAT). GTP is bound by residues 9 to 16 (GRPNVGKS), 57 to 61 (DTGGI), 119 to 122 (NKID), 185 to 192 (GRPNVGKS), 232 to 236 (DTAGL), and 297 to 300 (NKWD). Residues 353–437 (HEFSTSEVNQ…PVCFIFREGA (85 aa)) form the KH-like domain.

The protein belongs to the TRAFAC class TrmE-Era-EngA-EngB-Septin-like GTPase superfamily. EngA (Der) GTPase family. As to quaternary structure, associates with the 50S ribosomal subunit.

In terms of biological role, GTPase that plays an essential role in the late steps of ribosome biogenesis. This is GTPase Der from Xanthomonas oryzae pv. oryzae (strain MAFF 311018).